A 357-amino-acid polypeptide reads, in one-letter code: MSRPTRLVIEPSALLHNLSQIKHLAPGKKVIAMVKANAYGCGVREVAPVLDGRIEAFGVACLEEALAIRALGVETPCILFQGVFSSDELSVAVENDFACVLHHAQQLEWLIKTPLPYPIKVWVKVNTGMHRLGFKIHELQKVMGALQTCTWVDKSIGLMTHLACADEPHRPENQQQISLFQEISIPGFRQRSIANSAAIISFPDSQADVVRPGIMLYGVSPFANQNAHDLGLIPVMRFMSAISAIHDNPSFAQVGYGGTWKSDKPSRIGVVAAGYGDGYPRHISEKTPVWVRGREVSIVGRVSMDMLTIDLTEHPDIEIGDEVELWGTHVLVERIAKSAGTVGYELLCQISERVRYK.

The active-site Proton acceptor; specific for D-alanine is the Lys-35. N6-(pyridoxal phosphate)lysine is present on Lys-35. Arg-131 serves as a coordination point for substrate. The Proton acceptor; specific for L-alanine role is filled by Tyr-256. Position 304 (Met-304) interacts with substrate.

The protein belongs to the alanine racemase family. Requires pyridoxal 5'-phosphate as cofactor.

It carries out the reaction L-alanine = D-alanine. Its pathway is amino-acid biosynthesis; D-alanine biosynthesis; D-alanine from L-alanine: step 1/1. Its function is as follows. Catalyzes the interconversion of L-alanine and D-alanine. May also act on other amino acids. In Legionella pneumophila (strain Paris), this protein is Alanine racemase (alr).